The following is a 190-amino-acid chain: Early nodulin-like protein 12 (190 aa).

The signal sequence occupies residues 1 to 21; sequence MGIIVPVLTLVFLLFAKVSHG. A Phytocyanin domain is found at 26 to 130; it reads RVILVGGSVG…GEKITLVVLA (105 aa). Asparagine 44 carries N-linked (GlcNAc...) asparagine glycosylation. A disulfide bond links cysteine 84 and cysteine 118. The disordered stretch occupies residues 135–164; the sequence is GGGSSSGDAPKVSPVSPTAQTPAPAPGPAA. The span at 151–164 shows a compositional bias: low complexity; the sequence is PTAQTPAPAPGPAA. A lipid anchor (GPI-anchor amidated asparagine) is attached at asparagine 167. The propeptide at 168–190 is removed in mature form; it reads AAVGLKVASGWFLTAVVVGLAMA.

It belongs to the early nodulin-like (ENODL) family. As to expression, confined to flowers and siliques. Expressed in female gametophytes.

It is found in the cell membrane. In terms of biological role, may act as a carbohydrate transporter. Required, together with ENODL11, ENODL12, ENODL13, ENODL14 and ENODL15, for male-female communication and pollen tube reception and burst at the synergid cell surface of the female gametophyte. In Arabidopsis thaliana (Mouse-ear cress), this protein is Early nodulin-like protein 12.